The chain runs to 126 residues: Large ribosomal subunit protein bL17 (126 aa).

Belongs to the bacterial ribosomal protein bL17 family. Part of the 50S ribosomal subunit. Contacts protein L32.

The chain is Large ribosomal subunit protein bL17 from Rickettsia felis (strain ATCC VR-1525 / URRWXCal2) (Rickettsia azadi).